A 148-amino-acid polypeptide reads, in one-letter code: Ribonuclease H (148 aa).

Positions 1–143 (MNQVVIYTDG…ADMLANKGVE (143 aa)) constitute an RNase H type-1 domain. Residues Asp-9, Glu-47, Asp-69, and Asp-135 each coordinate Mg(2+).

Belongs to the RNase H family. In terms of assembly, monomer. The cofactor is Mg(2+).

The protein resides in the cytoplasm. The catalysed reaction is Endonucleolytic cleavage to 5'-phosphomonoester.. Endonuclease that specifically degrades the RNA of RNA-DNA hybrids. The sequence is that of Ribonuclease H from Acidovorax sp. (strain JS42).